We begin with the raw amino-acid sequence, 300 residues long: Protease HtpX homolog (300 aa).

Helical transmembrane passes span 5–25 (IFLLTLTNIAVIFLLTLFISL) and 41–61 (TLFLFSMVVGFTGSFISLAIS). His-146 serves as a coordination point for Zn(2+). Residue Glu-147 is part of the active site. His-150 is a binding site for Zn(2+). A run of 2 helical transmembrane segments spans residues 161-181 (LLQGVVNTFVVFLSRIIGFFV) and 196-216 (IGFYLGMFISEIVLGLLASII). Glu-225 is a Zn(2+) binding site.

The protein belongs to the peptidase M48B family. Zn(2+) is required as a cofactor.

The protein resides in the cell inner membrane. The polypeptide is Protease HtpX homolog (Methylacidiphilum infernorum (isolate V4) (Methylokorus infernorum (strain V4))).